The primary structure comprises 556 residues: Putative D-arabinono-1,4-lactone oxidase (556 aa).

Residues 47 to 217 (FTSLPELYIQ…TEVTFKAVPA (171 aa)) enclose the FAD-binding PCMH-type domain. His-84 is subject to Pros-8alpha-FAD histidine.

It belongs to the oxygen-dependent FAD-linked oxidoreductase family. Requires FAD as cofactor.

The protein resides in the mitochondrion membrane. It catalyses the reaction D-arabinono-1,4-lactone + O2 = dehydro-D-arabinono-1,4-lactone + H2O2 + H(+). The protein operates within cofactor biosynthesis; D-erythroascorbate biosynthesis; dehydro-D-arabinono-1,4-lactone from D-arabinose: step 2/2. This Neurospora crassa (strain ATCC 24698 / 74-OR23-1A / CBS 708.71 / DSM 1257 / FGSC 987) protein is Putative D-arabinono-1,4-lactone oxidase (alo-1).